Here is a 1357-residue protein sequence, read N- to C-terminus: DNA-directed RNA polymerase subunit beta (1357 aa).

It belongs to the RNA polymerase beta chain family. As to quaternary structure, the RNAP catalytic core consists of 2 alpha, 1 beta, 1 beta' and 1 omega subunit. When a sigma factor is associated with the core the holoenzyme is formed, which can initiate transcription.

It catalyses the reaction RNA(n) + a ribonucleoside 5'-triphosphate = RNA(n+1) + diphosphate. Its function is as follows. DNA-dependent RNA polymerase catalyzes the transcription of DNA into RNA using the four ribonucleoside triphosphates as substrates. The chain is DNA-directed RNA polymerase subunit beta from Pseudomonas aeruginosa (strain UCBPP-PA14).